The chain runs to 267 residues: Indole-3-glycerol phosphate synthase (267 aa).

This sequence belongs to the TrpC family.

It catalyses the reaction 1-(2-carboxyphenylamino)-1-deoxy-D-ribulose 5-phosphate + H(+) = (1S,2R)-1-C-(indol-3-yl)glycerol 3-phosphate + CO2 + H2O. The protein operates within amino-acid biosynthesis; L-tryptophan biosynthesis; L-tryptophan from chorismate: step 4/5. The chain is Indole-3-glycerol phosphate synthase from Polynucleobacter necessarius subsp. necessarius (strain STIR1).